Reading from the N-terminus, the 219-residue chain is Outer spore wall protein 4 (219 aa).

An N-terminal signal peptide occupies residues 1–19 (MRFQLFIYFYFTIVVIAGT). Over 20–170 (NTIQQFSDAG…KKKRLDRIKR (151 aa)) the chain is Extracellular. N-linked (GlcNAc...) asparagine glycans are attached at residues N42, N62, and N136. Residues 171 to 191 (ILTVSLLELGLAQGVADLCAV) traverse the membrane as a helical segment. The Cytoplasmic segment spans residues 192 to 193 (AP). Residues 194–214 (FACLLGVTVGSIGFIFWLALI) traverse the membrane as a helical segment. Topologically, residues 215–219 (YNAIQ) are extracellular.

It belongs to the OSW4/6 family. Post-translationally, N-glycosylated.

It is found in the membrane. Its function is as follows. Involved in spore wall assembly. May be involved in maintaining genome integrity. This is Outer spore wall protein 4 from Saccharomyces cerevisiae (strain ATCC 204508 / S288c) (Baker's yeast).